A 501-amino-acid polypeptide reads, in one-letter code: Sugar phosphate exchanger 3 (501 aa).

Residues 20–40 (CTHHHIVVFLLTFFSYSLLHA) traverse the membrane as a helical segment. An N-linked (GlcNAc...) asparagine glycan is attached at Asn62. The next 5 membrane-spanning stretches (helical) occupy residues 87-107 (TLFL…GLFV), 119-139 (WVLS…GTLT), 153-173 (LWVV…AVMG), 183-203 (FVFG…AFLA), and 214-234 (AFLV…CGLL). An N-linked (GlcNAc...) asparagine glycan is attached at Asn273. Helical transmembrane passes span 298–320 (GVVL…FFWL), 340–360 (IWYD…SDVL), 364–384 (APVL…YSRS), 393–413 (VIMA…SSAI), 435–455 (GIVD…VSLI), and 459–479 (LGWM…ILFI).

Belongs to the major facilitator superfamily. Organophosphate:Pi antiporter (OPA) (TC 2.A.1.4) family.

It is found in the endoplasmic reticulum membrane. The protein resides in the lysosome membrane. Functionally, unlike the other SLC37 members, seems to lack glucose-6-phosphate antiporter activity. This chain is Sugar phosphate exchanger 3 (SLC37A3), found in Gallus gallus (Chicken).